A 339-amino-acid chain; its full sequence is Retroviral-like aspartic protease 1 (339 aa).

Positions 1-188 are excised as a propeptide; that stretch reads MRNPGGPGWA…SEPEEILFAN (188 aa). A disordered region spans residues 34–53; that stretch reads VPAPFNSSRQGKNTAQPTEP. The segment covering 38-53 has biased composition (polar residues); that stretch reads FNSSRQGKNTAQPTEP. An N-linked (GlcNAc...) asparagine glycan is attached at Asn-39. The chain crosses the membrane as a helical span at residues 55–75; sequence LSSVIAPTLFCAFLYLACVTA. Residues 205–286 form the Peptidase A2 domain; the sequence is VRFLVDSGAQ…AEEAIIGTDV (82 aa). The active site involves Asp-210. Asn-274 carries an N-linked (GlcNAc...) asparagine glycan. Residues 325 to 339 constitute a propeptide that is removed on maturation; sequence LIEEEEGSSAPEGSH.

As to quaternary structure, homodimer. Undergoes autocleavage which is necessary for activation of the protein. Highly expressed in stratified epithelia in skin, tongue, esophagus, forestomach and vagina. Also expressed in trachea, urinary bladder and thymus. Undetectable in simple epithelia. Within the epidermis, expressed exclusively in the granular layer (at protein level). Levels are elevated in benign skin tumors but are down-regulated in squamous cell carcinomas.

The protein localises to the membrane. Functionally, protease responsible for filaggrin processing, essential for the maintenance of a proper epidermis organization. The protein is Retroviral-like aspartic protease 1 of Mus musculus (Mouse).